We begin with the raw amino-acid sequence, 256 residues long: MEFNWSEIALNTAKELEEKIMPLFGTKKAGENVGTNVSGDVTKYVDKVAEDIILKRLVPLGVNVVSEEVGTVDSGSDYTVVVDPLDGSYNFSAGIPIFAFSLGIFKGKKPVYGAIYEFLPENFYEAKPGKGAYLNGERIRVNEPEPGKEALSFYTRGRCLGLVKKVKRVRVLGAIAVELAYVARGSLDGVFDIRNYVRPTDVAAGVLLVREAGGIVTDERGREFEVKLSATEKTNIIAVANERLLNTILEAMKDEP.

Mg(2+) is bound by residues Glu67, Asp83, Leu85, and Asp86. Residues 86–88 (DGS), Arg170, Ile175, and Arg194 contribute to the substrate site. Asp201 contributes to the Mg(2+) binding site.

It belongs to the inositol monophosphatase superfamily. FBPase class 4 family. In terms of assembly, homodimer. It depends on Mg(2+) as a cofactor.

The enzyme catalyses beta-D-fructose 1,6-bisphosphate + H2O = beta-D-fructose 6-phosphate + phosphate. The catalysed reaction is a myo-inositol phosphate + H2O = myo-inositol + phosphate. Phosphatase with broad specificity; it can dephosphorylate fructose 1,6-bisphosphate (FBP) and inositol-1-phosphate (IMP). However, while possessing a high FBPase activity in vitro, does not participate in gluconeogenesis in vivo. The sequence is that of Fructose-1,6-bisphosphatase/inositol-1-monophosphatase (suhB) from Thermococcus kodakarensis (strain ATCC BAA-918 / JCM 12380 / KOD1) (Pyrococcus kodakaraensis (strain KOD1)).